We begin with the raw amino-acid sequence, 1578 residues long: BRD4-interacting chromatin-remodeling complex-associated protein (1578 aa).

Disordered regions lie at residues 80-101 (DILG…DQPC), 631-673 (PAVT…PSLA), and 725-951 (IVSA…PPPR). Gly residues predominate over residues 86-96 (AAGGGGGGGGA). Low complexity-rich tracts occupy residues 631–662 (PAVT…TQPQ) and 764–782 (IPAA…PSLP). Pro residues-rich tracts occupy residues 793–816 (MPSP…PPSQ), 824–841 (PSEP…PPTL), and 865–888 (PGPP…PASH). A compositionally biased stretch (low complexity) spans 889-906 (LPPASTPSAVASSSEPSA). A Phosphoserine modification is found at S929. T931 bears the Phosphothreonine mark. Residues 942-951 (PTAPPPPPPR) show a composition bias toward pro residues. K1067 carries the post-translational modification N6-acetyllysine. A disordered region spans residues 1206–1316 (EKPDEYVSSS…NRPPIKTYEA (111 aa)). Composition is skewed to low complexity over residues 1233-1247 (SHGQ…GTSA) and 1275-1294 (ASSS…AASS). A Glycyl lysine isopeptide (Lys-Gly) (interchain with G-Cter in SUMO2) cross-link involves residue K1327. 2 disordered regions span residues 1342–1435 (DPVH…PTKV) and 1457–1578 (VLKG…TLNR). Positions 1346–1370 (QPLPAPTPAKGAEPPPHPAPPPLPP) are enriched in pro residues. The residue at position 1427 (S1427) is a Phosphoserine. Polar residues predominate over residues 1502–1532 (ASFSSDSPQDDTLTEHLQSAIDSILNLQQAP). Residues 1538–1553 (GPYPHTGPTPGTPTSP) show a composition bias toward pro residues.

Component of the multiprotein chromatin-remodeling complexes SWI/SNF: SWI/SNF-A (BAF), SWI/SNF-B (PBAF) and related complexes. The canonical complex contains a catalytic subunit (either SMARCA4/BRG1/BAF190A or SMARCA2/BRM/BAF190B) and at least SMARCE1, ACTL6A/BAF53, SMARCC1/BAF155, SMARCC2/BAF170, and SMARCB1/SNF5/BAF47. Other subunits specific to each of the complexes may also be present permitting several possible combinations developmentally and tissue specific. Component of the SWI/SNF (GBAF) subcomplex, which includes at least BICRA or BICRAL (mutually exclusive), BRD9, SS18, the core BAF subunits, SMARCA2/BRM, SMARCA4/BRG1/BAF190A, ACTL6A/BAF53, SMARCC1/BAF155, and SMARCD1/BAF60A. Interacts with BRD4; the interaction bridges BRD4 to the GBAF complex.

It localises to the nucleus. In terms of biological role, component of SWI/SNF chromatin remodeling subcomplex GBAF that carries out key enzymatic activities, changing chromatin structure by altering DNA-histone contacts within a nucleosome in an ATP-dependent manner. May play a role in BRD4-mediated gene transcription. This is BRD4-interacting chromatin-remodeling complex-associated protein from Mus musculus (Mouse).